A 482-amino-acid chain; its full sequence is Nicotine dehydrogenase (482 aa).

Residues M1–A38 constitute a signal peptide (tat-type signal). Residues A64, E83, A84, R85, R91, W108, and V279 each contribute to the FAD site. T381 provides a ligand contact to (S)-nicotine. FAD contacts are provided by A453, N462, and I463.

Belongs to the flavin monoamine oxidase family. As to quaternary structure, monomer in solution. Homodimer in solution. Forms homodimers in the crystal. Requires FAD as cofactor. Predicted to be exported by the Tat system. The position of the signal peptide cleavage has not been experimentally proven.

The protein resides in the periplasm. The enzyme catalyses (S)-nicotine + 2 Fe(III)-[cytochrome c] = N-methylmyosmine + 2 Fe(II)-[cytochrome c] + 2 H(+). It functions in the pathway alkaloid degradation; nicotine degradation. Its activity is regulated as follows. The catalytic rate is not significantly affected by pH. Functionally, involved in nicotine degradation. Catalyzes the conversion of nicotine to N-methylmyosmine. N-methylmyosmine undergoes spontaneous hydrolysis to form pseudooxynicotine (PN). S-nicotine is the optimal substrate. Has lower activity with some nicotine analogs, but shows no activity towards neurotransmitters, including serotonin, dopamine, and norepinephrine, nicotine metabolites and common neuroactive drugs. The enzyme is stereospecific with poor activity with (R)-nicotine as the substrate. The c-type cytochrome protein CycN is the physiological electron acceptor. O(2) is a poor electron acceptor. The protein is Nicotine dehydrogenase of Pseudomonas putida (strain DSM 28022 / S16).